A 481-amino-acid polypeptide reads, in one-letter code: Proline--tRNA ligase (481 aa).

Belongs to the class-II aminoacyl-tRNA synthetase family. ProS type 3 subfamily. Homodimer.

It is found in the cytoplasm. The catalysed reaction is tRNA(Pro) + L-proline + ATP = L-prolyl-tRNA(Pro) + AMP + diphosphate. Its function is as follows. Catalyzes the attachment of proline to tRNA(Pro) in a two-step reaction: proline is first activated by ATP to form Pro-AMP and then transferred to the acceptor end of tRNA(Pro). The sequence is that of Proline--tRNA ligase from Thermococcus kodakarensis (strain ATCC BAA-918 / JCM 12380 / KOD1) (Pyrococcus kodakaraensis (strain KOD1)).